Consider the following 273-residue polypeptide: 2,3,4,5-tetrahydropyridine-2,6-dicarboxylate N-succinyltransferase (273 aa).

Arginine 104 and aspartate 141 together coordinate substrate.

Belongs to the transferase hexapeptide repeat family. As to quaternary structure, homotrimer.

The protein resides in the cytoplasm. It carries out the reaction (S)-2,3,4,5-tetrahydrodipicolinate + succinyl-CoA + H2O = (S)-2-succinylamino-6-oxoheptanedioate + CoA. It functions in the pathway amino-acid biosynthesis; L-lysine biosynthesis via DAP pathway; LL-2,6-diaminopimelate from (S)-tetrahydrodipicolinate (succinylase route): step 1/3. The sequence is that of 2,3,4,5-tetrahydropyridine-2,6-dicarboxylate N-succinyltransferase from Acinetobacter baylyi (strain ATCC 33305 / BD413 / ADP1).